The primary structure comprises 502 residues: Aspartyl/glutamyl-tRNA(Asn/Gln) amidotransferase subunit B (502 aa).

The protein belongs to the GatB/GatE family. GatB subfamily. As to quaternary structure, heterotrimer of A, B and C subunits.

The enzyme catalyses L-glutamyl-tRNA(Gln) + L-glutamine + ATP + H2O = L-glutaminyl-tRNA(Gln) + L-glutamate + ADP + phosphate + H(+). The catalysed reaction is L-aspartyl-tRNA(Asn) + L-glutamine + ATP + H2O = L-asparaginyl-tRNA(Asn) + L-glutamate + ADP + phosphate + 2 H(+). In terms of biological role, allows the formation of correctly charged Asn-tRNA(Asn) or Gln-tRNA(Gln) through the transamidation of misacylated Asp-tRNA(Asn) or Glu-tRNA(Gln) in organisms which lack either or both of asparaginyl-tRNA or glutaminyl-tRNA synthetases. The reaction takes place in the presence of glutamine and ATP through an activated phospho-Asp-tRNA(Asn) or phospho-Glu-tRNA(Gln). The sequence is that of Aspartyl/glutamyl-tRNA(Asn/Gln) amidotransferase subunit B from Brucella suis (strain ATCC 23445 / NCTC 10510).